The primary structure comprises 570 residues: Laccase-3 (570 aa).

Positions 1–25 are cleaved as a signal peptide; it reads MESFRRFSLLSFIALLAYFAFLASA. Plastocyanin-like domains are found at residues 33–149 and 159–310; these read VITP…PRLG and RDIP…YVNA. The N-linked (GlcNAc...) asparagine glycan is linked to Asn79. Cu cation is bound by residues His83, His85, His128, and His130. N-linked (GlcNAc...) asparagine glycans are attached at residues Asn188, Asn298, Asn332, Asn383, Asn393, and Asn433. Positions 419 to 554 constitute a Plastocyanin-like 3 domain; the sequence is DFPPVPPVQF…AMVFLVENGR (136 aa). Cu cation is bound by residues His471, His474, His476, His533, Cys534, His535, and His539.

The protein belongs to the multicopper oxidase family. It depends on Cu cation as a cofactor. In terms of tissue distribution, mostly expressed in roots and siliques.

It localises to the secreted. It is found in the extracellular space. Its subcellular location is the apoplast. The catalysed reaction is 4 hydroquinone + O2 = 4 benzosemiquinone + 2 H2O. Lignin degradation and detoxification of lignin-derived products. The chain is Laccase-3 (LAC3) from Arabidopsis thaliana (Mouse-ear cress).